Consider the following 269-residue polypeptide: dITP/XTP pyrophosphatase (269 aa).

22–27 (SNNAHK) is a binding site for substrate. Asp82 acts as the Proton acceptor in catalysis. Residue Asp82 coordinates Mg(2+). Residues Ser83, 165 to 168 (FGYD), Lys188, and 193 to 194 (HR) contribute to the substrate site.

This sequence belongs to the HAM1 NTPase family. In terms of assembly, homodimer. Mg(2+) serves as cofactor.

The enzyme catalyses XTP + H2O = XMP + diphosphate + H(+). It catalyses the reaction dITP + H2O = dIMP + diphosphate + H(+). It carries out the reaction ITP + H2O = IMP + diphosphate + H(+). In terms of biological role, pyrophosphatase that catalyzes the hydrolysis of nucleoside triphosphates to their monophosphate derivatives, with a high preference for the non-canonical purine nucleotides XTP (xanthosine triphosphate), dITP (deoxyinosine triphosphate) and ITP. Seems to function as a house-cleaning enzyme that removes non-canonical purine nucleotides from the nucleotide pool, thus preventing their incorporation into DNA/RNA and avoiding chromosomal lesions. This Treponema pallidum (strain Nichols) protein is dITP/XTP pyrophosphatase.